Consider the following 162-residue polypeptide: Small ribosomal subunit protein uS5 (162 aa).

An S5 DRBM domain is found at 7–70 (EEKMILIRRT…YARRNMVEVP (64 aa)).

It belongs to the universal ribosomal protein uS5 family. Part of the 30S ribosomal subunit. Contacts proteins S4 and S8.

Functionally, with S4 and S12 plays an important role in translational accuracy. In terms of biological role, located at the back of the 30S subunit body where it stabilizes the conformation of the head with respect to the body. This is Small ribosomal subunit protein uS5 (rpsE) from Thermus thermophilus (strain ATCC BAA-163 / DSM 7039 / HB27).